A 232-amino-acid chain; its full sequence is MAASAASSEHFEKLHEIFRGLLEDLQGVPERLLGTAGTEEKKKLVRDFDENQQEANETLAEMEEELRYAPLTFRNPMMSKLRNYRKDLAKLHREVRSTPLTAAPGGRGDLKYGTYTLENEHLNRLQSQRALLLQGTESLNRATQSIERSHRIATETDQIGTEIIEELGEQRDQLERTKSRLVNTNENLSKSRKILRSMSRKVITNKLLLSVIILLELAILVGLVYYKFFRHH.

Position 2 is an N-acetylalanine (Ala2). Interaction with CLINT1 stretches follow at residues 2–23 (AASA…GLLE) and 69–73 (APLTF). Topologically, residues 2 to 208 (AASAASSEHF…SRKVITNKLL (207 aa)) are cytoplasmic. Residues 36-98 (AGTEEKKKLV…AKLHREVRST (63 aa)) are a coiled coil. At Arg107 the chain carries Omega-N-methylarginine. At Ser138 the chain carries Phosphoserine. Residues 160 to 201 (GTEIIEELGEQRDQLERTKSRLVNTNENLSKSRKILRSMSRK) are a coiled coil. The chain crosses the membrane as a helical; Anchor for type IV membrane protein span at residues 209–229 (LSVIILLELAILVGLVYYKFF). The Vesicular segment spans residues 230–232 (RHH).

Belongs to the VTI1 family. Forms a SNARE complex with STX7, STX8 and VAMP8 which functions in the homotypic fusion of late endosomes. Component of the SNARE complex composed of STX7, STX8, VAMP7 and VIT1B that is required for heterotypic fusion of late endosomes with lysosomes. May interact with STX17. Interacts with CLINT1. In terms of tissue distribution, broadly expressed.

It localises to the early endosome membrane. It is found in the late endosome membrane. The protein localises to the lysosome membrane. Its subcellular location is the cytoplasmic granule. The protein resides in the recycling endosome membrane. Functionally, V-SNARE that mediates vesicle transport pathways through interactions with t-SNAREs on the target membrane. These interactions are proposed to mediate aspects of the specificity of vesicle trafficking and to promote fusion of the lipid bilayers. The protein is Vesicle transport through interaction with t-SNAREs homolog 1B (Vti1b) of Mus musculus (Mouse).